A 252-amino-acid polypeptide reads, in one-letter code: 4-formylbenzenesulfonate dehydrogenase TsaC1/TsaC2 (252 aa).

NAD(+) is bound by residues 9-36 (IVTG…LVAD) and Asp-62. Residue Ser-142 coordinates substrate. Tyr-155 functions as the Proton acceptor in the catalytic mechanism. Lys-159 provides a ligand contact to NAD(+).

It belongs to the short-chain dehydrogenases/reductases (SDR) family. As to quaternary structure, homodimer.

It catalyses the reaction 4-formylbenzenesulfonate + NAD(+) + H2O = 4-sulfobenzoate + NADH + 2 H(+). In terms of biological role, involved in the toluene-4-sulfonate degradation pathway. Does not discriminate between the sulfonate and the carboxyl substituents and can also be involved in the p-toluenecarboxylate degradation pathway. The protein is 4-formylbenzenesulfonate dehydrogenase TsaC1/TsaC2 (tsaC1) of Comamonas testosteroni (Pseudomonas testosteroni).